The chain runs to 1008 residues: Probable transport protein MmpL10 (1008 aa).

Transmembrane regions (helical) follow at residues 23-43 (WPWV…MTVP), 202-222 (IELV…RNPI), 225-245 (LLPL…VSGV), 257-277 (MIVL…VFLI), 301-321 (ALIS…ITFL), 340-360 (IGIA…LVLA), 389-409 (VAYL…ASLV), 835-855 (DLQL…MALL), 862-882 (IYLV…CVLV), 895-915 (VPGL…MLLA), 940-960 (VITA…LSSI), and 961-981 (ATVV…TFIV).

The protein belongs to the resistance-nodulation-cell division (RND) (TC 2.A.6) family. MmpL subfamily.

The protein localises to the cell membrane. The protein is Probable transport protein MmpL10 (mmpL10) of Mycobacterium leprae (strain TN).